The sequence spans 215 residues: Protein LURP-one-related 16 (215 aa).

A lipid anchor (N-myristoyl glycine) is attached at Gly2.

This sequence belongs to the LOR family.

In terms of biological role, might be related to the phospholipid scramblase and tubby-like superfamily of membrane tethered transcription factors. This is Protein LURP-one-related 16 from Arabidopsis thaliana (Mouse-ear cress).